Reading from the N-terminus, the 318-residue chain is Thymidylate synthase (318 aa).

Residues Arg-25 and 180-181 contribute to the dUMP site; that span reads RR. Catalysis depends on Cys-200, which acts as the Nucleophile. DUMP is bound by residues 220–223, Asn-231, and 261–263; these read RSGD and HIY. Position 223 (Asp-223) interacts with (6R)-5,10-methylene-5,6,7,8-tetrahydrofolate. Ala-317 serves as a coordination point for (6R)-5,10-methylene-5,6,7,8-tetrahydrofolate.

This sequence belongs to the thymidylate synthase family. Bacterial-type ThyA subfamily. Homodimer.

It localises to the cytoplasm. The catalysed reaction is dUMP + (6R)-5,10-methylene-5,6,7,8-tetrahydrofolate = 7,8-dihydrofolate + dTMP. It functions in the pathway pyrimidine metabolism; dTTP biosynthesis. In terms of biological role, catalyzes the reductive methylation of 2'-deoxyuridine-5'-monophosphate (dUMP) to 2'-deoxythymidine-5'-monophosphate (dTMP) while utilizing 5,10-methylenetetrahydrofolate (mTHF) as the methyl donor and reductant in the reaction, yielding dihydrofolate (DHF) as a by-product. This enzymatic reaction provides an intracellular de novo source of dTMP, an essential precursor for DNA biosynthesis. This is Thymidylate synthase from Lactobacillus gasseri (strain ATCC 33323 / DSM 20243 / BCRC 14619 / CIP 102991 / JCM 1131 / KCTC 3163 / NCIMB 11718 / NCTC 13722 / AM63).